A 420-amino-acid chain; its full sequence is Probable pectate lyase C (420 aa).

A signal peptide spans 1–20; the sequence is MKLSAPLLVSLAAFSQAVTA. Residues Asn-49, Asn-165, and Asn-202 are each glycosylated (N-linked (GlcNAc...) asparagine). The active site involves Arg-205. The EF-hand domain occupies 262 to 297; sequence NANFHGYVDNNYYDPDKDGQLDGSELGVSSSNYGGM. Positions 275, 277, 279, 281, and 286 each coordinate Ca(2+). The segment at 357–395 is disordered; it reads ATMGGPGTLNGGTPAKDTDGDGIPDEAEKQLGTDPNTND. Asn-394 carries an N-linked (GlcNAc...) asparagine glycan.

It belongs to the polysaccharide lyase 1 family. Ca(2+) serves as cofactor.

Its subcellular location is the secreted. The enzyme catalyses Eliminative cleavage of (1-&gt;4)-alpha-D-galacturonan to give oligosaccharides with 4-deoxy-alpha-D-galact-4-enuronosyl groups at their non-reducing ends.. Functionally, pectinolytic enzyme consist of four classes of enzymes: pectin lyase, polygalacturonase, pectin methylesterase and rhamnogalacturonase. Among pectinolytic enzymes, pectin lyase is the most important in depolymerization of pectin, since it cleaves internal glycosidic bonds of highly methylated pectins. Favors pectate, the anion, over pectin, the methyl ester. This is Probable pectate lyase C (plyC) from Neosartorya fischeri (strain ATCC 1020 / DSM 3700 / CBS 544.65 / FGSC A1164 / JCM 1740 / NRRL 181 / WB 181) (Aspergillus fischerianus).